The following is a 536-amino-acid chain: Probable galacturonosyltransferase 10 (536 aa).

Topologically, residues 1–16 (MRRRGGDSFRRAGRRK) are cytoplasmic. A helical; Signal-anchor for type II membrane protein transmembrane segment spans residues 17–37 (ISNVVWWVLSGIALLLFFLIL). Topologically, residues 38–536 (SKAGHIEPRP…SPFMQQCNFH (499 aa)) are lumenal. Asparagine 64, asparagine 246, asparagine 300, asparagine 403, and asparagine 436 each carry an N-linked (GlcNAc...) asparagine glycan.

This sequence belongs to the glycosyltransferase 8 family. As to expression, expressed in roots, inflorescences, siliques, leaves and stems.

Its subcellular location is the golgi apparatus membrane. The protein operates within glycan metabolism; pectin biosynthesis. In terms of biological role, may be involved in pectin and/or xylans biosynthesis in cell walls. This chain is Probable galacturonosyltransferase 10 (GAUT10), found in Arabidopsis thaliana (Mouse-ear cress).